The sequence spans 427 residues: O-methyltransferase PaMT (427 aa).

Positions 230 and 281 each coordinate S-adenosyl-L-methionine. The Proton acceptor role is filled by His326.

Belongs to the class I-like SAM-binding methyltransferase superfamily. Cation-independent O-methyltransferase family. COMT subfamily. Requires S-adenosyl-L-methionine as cofactor.

It participates in mycotoxin biosynthesis. Functionally, O-methyltransferase; part of the 2 gene clusters that mediate the biosynthesis of fusicoccins, diterpene glucosides that display phytohormone-like activity and function as potent activators of plasma membrane H(+)-ATPases in plants by modifying 14-3-3 proteins and cause the plant disease constriction canker. The first step in the pathway is performed by the fusicoccadiene synthase PaFS that possesses both prenyl transferase and terpene cyclase activity, converting isopentenyl diphosphate and dimethylallyl diphosphate into geranylgeranyl diphosphate (GGDP) and successively converting GGDP into fusicocca-2,10(14)-diene, a precursor for fusicoccin H. The second step is the oxidation at the C-8 position by the cytochrome P450 monooxygenase PaP450-2 to yield fusicocca-2,10(14)-diene-8-beta-ol. The cytochrome P450 monooxygenase PaP450-1 then catalyzes the hydroxylation at the C-16 position to produce fusicocca-2,10(14)-diene-8-beta,16-diol. The dioxygenase fc-dox then catalyzes the 16-oxydation of fusicocca-2,10(14)-diene-8-beta,16-diol to yield an aldehyde (8-beta-hydroxyfusicocca-1,10(14)-dien-16-al). The short-chain dehydrogenase/reductase fc-sdr catalyzes the reduction of the aldehyde to yield fusicocca-1,10(14)-diene-8-beta,16-diol. The next step is the hydroxylation at C-9 performed by the cytochrome P450 monooxygenase PaP450-3 that leads to fusicoccin H aglycon which is glycosylated to fusicoccin H by the O-glycosyltransferase PaGT. Hydroxylation at C-12 by the cytochrome P450 monooxygenase PaP450-4 leads then to the production of fusicoccin Q and is followed by methylation by the O-methyltransferase PaMT to yield fusicoccin P. Fusicoccin P is further converted to fusicoccin J via prenylation by the O-glucose prenyltransferase PaPT. Cytochrome P450 monooxygenase PaP450-5 then performs hydroxylation at C-19 to yield dideacetyl-fusicoccin A which is acetylated to 3'-O-deacetyl-fusicoccin A by the O-acetyltransferase PaAT-2. Finally, a another acetylation by the O-acetyltransferase PaAT-1 yields fusicoccin A. In Phomopsis amygdali (Fusicoccum amygdali), this protein is O-methyltransferase PaMT.